The chain runs to 304 residues: MLYGFDIGGTKIELAVFNDKLERQYTERVETPKDSYEQWLDVIVNLVEKADQKFACKGSVGLGLPGFVNHETGIAEITNIRVADNKPIIKDLSERLGREVRAENDANCFALSEAWDEENQQYPFVLGLILGTGFGGGLIFNGKVHSGQIGMAGELGHLQLNYHALKLLGWDKAPIYDCGCGNRACLDTYLSGRGFEMLYRDLKGEALSAKEIIERFYAADKTAVDFVGLFIELCAISLGNIITALDPHVIVLGGGLSNFDYLYEALPKALPKHLMRSAKVPVIKKAKYGDSGGVRGAAALFLTK.

Residues 4–11 and 133–140 contribute to the ATP site; these read GFDIGGTK and GFGGGLIF. Residues His157, Cys178, Cys180, and Cys185 each coordinate Zn(2+).

The protein belongs to the ROK (NagC/XylR) family. NagK subfamily.

It catalyses the reaction N-acetyl-D-glucosamine + ATP = N-acetyl-D-glucosamine 6-phosphate + ADP + H(+). It functions in the pathway cell wall biogenesis; peptidoglycan recycling. Functionally, catalyzes the phosphorylation of N-acetyl-D-glucosamine (GlcNAc) derived from cell-wall degradation, yielding GlcNAc-6-P. This Mannheimia succiniciproducens (strain KCTC 0769BP / MBEL55E) protein is N-acetyl-D-glucosamine kinase.